The chain runs to 360 residues: MKATIIFLLVAQVSWAGPFQQKGLFDFMLEDEASGIGPEEHFPEVPEIEPMGPVCPFRCQCHLRVVQCSDLGLEKVPKDLPPDTALLDLQNNKITEIKDGDFKNLKNLHTLILINNKISKISPGAFAPLVKLERLYLSKNQLKELPEKMPKTLQELRVHENEITKVRKSVFNGLNQMIVVELGTNPLKSSGIENGAFQGMKKLSYIRIADTNITTIPQGLPPSLTELHLDGNKITKVDAASLKGLNNLAKLGLSFNSISAVDNGSLANTPHLRELHLNNNKLVKVPGGLADHKYIQVVYLHNNNISAIGSNDFCPPGYNTKKASYSGVSLFSNPVQYWEIQPSTFRCVYVRAAVQLGNYK.

Residues 1 to 16 form the signal peptide; sequence MKATIIFLLVAQVSWA. The propeptide occupies 17–30; that stretch reads GPFQQKGLFDFMLE. O-linked (Xyl...) (glycosaminoglycan) serine glycosylation is present at Ser34. 2 disulfides stabilise this stretch: Cys55/Cys61 and Cys59/Cys68. 12 LRR repeats span residues 74–94, 95–118, 119–142, 143–163, 164–187, 188–213, 214–234, 235–258, 259–282, 283–305, 306–335, and 336–360; these read EKVPKDLPPDTALLDLQNNKI, TEIKDGDFKNLKNLHTLILINNKI, SKISPGAFAPLVKLERLYLSKNQL, KELPEKMPKTLQELRVHENEI, TKVRKSVFNGLNQMIVVELGTNPL, KSSGIENGAFQGMKKLSYIRIADTNI, TTIPQGLPPSLTELHLDGNKI, TKVDAASLKGLNNLAKLGLSFNSI, SAVDNGSLANTPHLRELHLNNNKL, VKVPGGLADHKYIQVVYLHNNNI, SAIGSNDFCPPGYNTKKASYSGVSLFSNPV, and QYWEIQPSTFRCVYVRAAVQLGNYK. Residue Asn212 is glycosylated (N-linked (GlcNAc...) asparagine). 2 N-linked (GlcNAc...) asparagine glycosylation sites follow: Asn263 and Asn304. Residues Cys314 and Cys347 are joined by a disulfide bond.

The protein belongs to the small leucine-rich proteoglycan (SLRP) family. SLRP class I subfamily. In terms of assembly, binds to type I and type II collagen, fibronectin and TGF-beta. Forms a ternary complex with MFAP2 and ELN. Interacts with DPT. The attached glycosaminoglycan chain can be either chondroitin 4-sulfate, chondroitin 6-sulfate or dermatan sulfate, depending upon the tissue of origin.

The protein localises to the secreted. It localises to the extracellular space. The protein resides in the extracellular matrix. Its function is as follows. May affect the rate of fibrils formation. This Bos taurus (Bovine) protein is Decorin (DCN).